We begin with the raw amino-acid sequence, 194 residues long: CMRF35-like molecule 5 (194 aa).

The N-terminal stretch at 1–18 is a signal peptide; it reads MWLSPSLLLLILPGYSIA. Residues 19-125 form the Ig-like V-type domain; the sequence is AKITGPTTVN…LGVKVQVTIN (107 aa). Topologically, residues 19-165 are extracellular; sequence AKITGPTTVN…LTRSPLKSTH (147 aa). Asparagine 28 carries an N-linked (GlcNAc...) asparagine glycan. An intrachain disulfide couples cysteine 39 to cysteine 107. Residues 166-186 form a helical membrane-spanning segment; the sequence is FLFLFLLELPLLLSMLGTVLW. Residues 187 to 194 are Cytoplasmic-facing; the sequence is VNRPQRRS.

Belongs to the CD300 family. As to quaternary structure, forms complexes with the CD300 family members with exception of CD300c. In terms of processing, N-glycosylated. As to expression, expression seems restricted to cells of myeloid lineage.

It localises to the cell membrane. In Homo sapiens (Human), this protein is CMRF35-like molecule 5 (CD300LD).